The following is a 133-amino-acid chain: Norrin (133 aa).

The first 24 residues, 1 to 24 (MRKHVLAASFSMLSLLVIMGDTDS), serve as a signal peptide directing secretion. Intrachain disulfides connect C39–C96, C55–C110, C65–C126, and C69–C128. The region spanning 39–132 (CMRHHYVDSI…ILSCHCEECN (94 aa)) is the CTCK domain.

As to quaternary structure, homodimer; disulfide-linked. Component of a complex, at least composed of TSPAN12, FZD4, LRP5/6 and norrin (NDP). Binds FZD4 with high affinity. Interacts with LRP6 (via Beta-propellers 1 and 2). In terms of tissue distribution, expressed in the outer nuclear, inner nuclear and ganglion cell layers of the retina, and in fetal and adult brain.

Its subcellular location is the secreted. In terms of biological role, activates the canonical Wnt signaling pathway through FZD4 and LRP5 coreceptor. Plays a central role in retinal vascularization by acting as a ligand for FZD4 that signals via stabilizing beta-catenin (CTNNB1) and activating LEF/TCF-mediated transcriptional programs. Acts in concert with TSPAN12 to activate FZD4 independently of the Wnt-dependent activation of FZD4, suggesting the existence of a Wnt-independent signaling that also promote accumulation the beta-catenin (CTNNB1). May be involved in a pathway that regulates neural cell differentiation and proliferation. Possible role in neuroectodermal cell-cell interaction. The protein is Norrin (NDP) of Homo sapiens (Human).